Reading from the N-terminus, the 238-residue chain is tRNA (guanine-N(7)-)-methyltransferase (238 aa).

Residues E68, E93, D120, and D143 each coordinate S-adenosyl-L-methionine. Residue D143 is part of the active site. Substrate-binding positions include K147, D179, and 216–219 (TKFE).

This sequence belongs to the class I-like SAM-binding methyltransferase superfamily. TrmB family.

The enzyme catalyses guanosine(46) in tRNA + S-adenosyl-L-methionine = N(7)-methylguanosine(46) in tRNA + S-adenosyl-L-homocysteine. It participates in tRNA modification; N(7)-methylguanine-tRNA biosynthesis. Catalyzes the formation of N(7)-methylguanine at position 46 (m7G46) in tRNA. The polypeptide is tRNA (guanine-N(7)-)-methyltransferase (Shewanella sp. (strain W3-18-1)).